A 567-amino-acid polypeptide reads, in one-letter code: Urease subunit alpha (567 aa).

Ni(2+) contacts are provided by His-134, His-136, and Lys-217. Position 217 is an N6-carboxylysine (Lys-217). Residue His-219 coordinates substrate. Ni(2+) contacts are provided by His-246 and His-272. His-320 functions as the Proton donor in the catalytic mechanism. Ni(2+) is bound at residue Asp-360.

This sequence belongs to the metallo-dependent hydrolases superfamily. Urease alpha subunit family. As to quaternary structure, heterotrimer of UreA (gamma), UreB (beta) and UreC (alpha) subunits. Three heterotrimers associate to form the active enzyme. Ni cation serves as cofactor. In terms of processing, carboxylation allows a single lysine to coordinate two nickel ions.

It localises to the cytoplasm. It carries out the reaction urea + 2 H2O + H(+) = hydrogencarbonate + 2 NH4(+). Its pathway is nitrogen metabolism; urea degradation; CO(2) and NH(3) from urea (urease route): step 1/1. This chain is Urease subunit alpha, found in Polynucleobacter asymbioticus (strain DSM 18221 / CIP 109841 / QLW-P1DMWA-1) (Polynucleobacter necessarius subsp. asymbioticus).